We begin with the raw amino-acid sequence, 177 residues long: MADKRRPQRDLPQINERIRFPEIRVIDSDGAQLGIITPNEAMEIADERGLDLVLVSETADPPVCRIMDYGKYKFEQEKKAREAKKKQHTADVKEVKMRYKIDEHDYQVRINQAKRFLKAGDKVKATVNFRGREIQHAHLAKELLDRMATDLATEADIQQAPKREGRNMMMFLSPKKV.

It belongs to the IF-3 family. As to quaternary structure, monomer.

It is found in the cytoplasm. IF-3 binds to the 30S ribosomal subunit and shifts the equilibrium between 70S ribosomes and their 50S and 30S subunits in favor of the free subunits, thus enhancing the availability of 30S subunits on which protein synthesis initiation begins. In Synechocystis sp. (strain ATCC 27184 / PCC 6803 / Kazusa), this protein is Translation initiation factor IF-3.